The primary structure comprises 199 residues: Superoxide dismutase [Mn/Fe] 2 (199 aa).

Histidine 27, histidine 81, aspartate 161, and histidine 165 together coordinate Fe(3+). Mn(2+)-binding residues include histidine 27, histidine 81, aspartate 161, and histidine 165.

Belongs to the iron/manganese superoxide dismutase family. In terms of assembly, homodimer. Can also form a heterodimer with SodA. It depends on Mn(2+) as a cofactor. Requires Fe(3+) as cofactor.

The catalysed reaction is 2 superoxide + 2 H(+) = H2O2 + O2. Destroys superoxide anion radicals which are normally produced within the cells and which are toxic to biological systems. Catalyzes the dismutation of superoxide anion radicals into O2 and H2O2 by successive reduction and oxidation of the transition metal ion at the active site. The chain is Superoxide dismutase [Mn/Fe] 2 (sodM) from Staphylococcus aureus (strain USA300).